A 188-amino-acid chain; its full sequence is Putative manganese efflux pump MntP (188 aa).

6 helical membrane-spanning segments follow: residues M1–I21, L40–F60, V64–V84, H105–M127, I131–G153, and I166–F186.

The protein belongs to the MntP (TC 9.B.29) family.

It localises to the cell membrane. Probably functions as a manganese efflux pump. The chain is Putative manganese efflux pump MntP from Bifidobacterium adolescentis (strain ATCC 15703 / DSM 20083 / NCTC 11814 / E194a).